A 379-amino-acid polypeptide reads, in one-letter code: Succinyl-diaminopimelate desuccinylase (379 aa).

Residue H70 participates in Zn(2+) binding. Residue D72 is part of the active site. Residue D103 participates in Zn(2+) binding. E137 functions as the Proton acceptor in the catalytic mechanism. Residues E138, E166, and H352 each contribute to the Zn(2+) site.

The protein belongs to the peptidase M20A family. DapE subfamily. As to quaternary structure, homodimer. Zn(2+) is required as a cofactor. The cofactor is Co(2+).

It carries out the reaction N-succinyl-(2S,6S)-2,6-diaminopimelate + H2O = (2S,6S)-2,6-diaminopimelate + succinate. The protein operates within amino-acid biosynthesis; L-lysine biosynthesis via DAP pathway; LL-2,6-diaminopimelate from (S)-tetrahydrodipicolinate (succinylase route): step 3/3. Its function is as follows. Catalyzes the hydrolysis of N-succinyl-L,L-diaminopimelic acid (SDAP), forming succinate and LL-2,6-diaminopimelate (DAP), an intermediate involved in the bacterial biosynthesis of lysine and meso-diaminopimelic acid, an essential component of bacterial cell walls. The chain is Succinyl-diaminopimelate desuccinylase from Shewanella putrefaciens (strain CN-32 / ATCC BAA-453).